Here is a 565-residue protein sequence, read N- to C-terminus: MQKTIMRRVAQGQGHEPVDLVIKNVRLFDLVTGDLIPTDIAICGDRIVGTYGEYEGVQAIDGAGRIAVPGFIDTHLHVESSLVTPFEFDRCVLPHGVTTAICDPHEMANVLGRAAFDYFLAAAERTIMDLRVNLSSCVPATSMETSGAVLNVDDLVAYRHHPKVIGLAEFMNIPGVLNGDPGCVDKLAAFADGHIDGHAPLMCGKALNGYLAAGISTDHEATAADEALEKVRKGMTVLIREGSVCKDLEALVPLLNVATSPFFAFCTDDRNPLEIAHEGHLDFLIRRAIELGVEPLAAYRAASLSAATAFGLRDRGQIAPGKRADIVLLDDLERCQVSDVISAGRLVNDALFNSREIVSPVGLESVKLPRPVTAQDMAVEGSGRDRPVMGVIPGQIITEFLRLDLPEDHGHVLPDPEQDVAKVCVVARHGHNDNIGRGFVRGFGLKEGALASSVGHDSHNICVVGTSDADMACAVNHLEKTGGGFVAVRNGQVLADLCLPVAGLMSDAPYEQVRDDLIILRKAAKTMGVVLEEPFLQLAFLPLPVIPHLKITDFGMIDVRTMSFV.

This sequence belongs to the metallo-dependent hydrolases superfamily. Adenine deaminase family. The cofactor is Mn(2+).

It catalyses the reaction adenine + H2O + H(+) = hypoxanthine + NH4(+). This is Adenine deaminase from Gluconobacter oxydans (strain 621H) (Gluconobacter suboxydans).